Reading from the N-terminus, the 110-residue chain is Insulin (110 aa).

An N-terminal signal peptide occupies residues 1 to 24; sequence MALWMRLLPLLALLALWGPDPAAA. 3 disulfide bridges follow: Cys-31–Cys-96, Cys-43–Cys-109, and Cys-95–Cys-100. The propeptide at 57–87 is c peptide; it reads EAEDLQVGQVELGGGPGAGSLQPLALEGSLQ.

The protein belongs to the insulin family. In terms of assembly, heterodimer of a B chain and an A chain linked by two disulfide bonds.

It is found in the secreted. Insulin decreases blood glucose concentration. It increases cell permeability to monosaccharides, amino acids and fatty acids. It accelerates glycolysis, the pentose phosphate cycle, and glycogen synthesis in liver. This Gorilla gorilla gorilla (Western lowland gorilla) protein is Insulin (INS).